The primary structure comprises 500 residues: Beta-glucosidase 28 (500 aa).

The N-terminal stretch at Met-1–Gly-24 is a signal peptide. Gln-45 provides a ligand contact to a beta-D-glucoside. Residue Asn-111 is glycosylated (N-linked (GlcNAc...) asparagine). Residues His-146 and Asn-191–Glu-192 each bind a beta-D-glucoside. The active-site Proton donor is Glu-192. A disulfide bridge links Cys-211 with Cys-219. Tyr-337 is an a beta-D-glucoside binding site. Asn-362 carries an N-linked (GlcNAc...) asparagine glycan. Glu-408 is an a beta-D-glucoside binding site. The Nucleophile role is filled by Glu-408. 3 N-linked (GlcNAc...) asparagine glycosylation sites follow: Asn-409, Asn-415, and Asn-416. A beta-D-glucoside contacts are provided by residues Trp-457, Glu-464–Phe-465, and Phe-473.

This sequence belongs to the glycosyl hydrolase 1 family.

The catalysed reaction is Hydrolysis of terminal, non-reducing beta-D-glucosyl residues with release of beta-D-glucose.. The sequence is that of Beta-glucosidase 28 (BGLU28) from Oryza sativa subsp. japonica (Rice).